Here is a 66-residue protein sequence, read N- to C-terminus: Large ribosomal subunit protein bL35 (66 aa).

Basic residues predominate over residues 1-46 (MPKMKTHRASAKRFKRTANGGLKRHHAFTGHRFHGKTKKQRRHLRK). The interval 1–52 (MPKMKTHRASAKRFKRTANGGLKRHHAFTGHRFHGKTKKQRRHLRKPAMVSR) is disordered.

Belongs to the bacterial ribosomal protein bL35 family.

This chain is Large ribosomal subunit protein bL35, found in Lactobacillus acidophilus (strain ATCC 700396 / NCK56 / N2 / NCFM).